Consider the following 242-residue polypeptide: ATP synthase subunit a (242 aa).

The next 6 helical transmembrane spans lie at 29–49, 84–104, 114–134, 140–160, 181–201, and 203–223; these read SSIY…LAFY, FIPL…LGMT, IIVT…VGFV, FLTL…IIVI, MAGH…MIYL, and FLPI…AILQ.

The protein belongs to the ATPase A chain family. As to quaternary structure, F-type ATPases have 2 components, CF(1) - the catalytic core - and CF(0) - the membrane proton channel. CF(1) has five subunits: alpha(3), beta(3), gamma(1), delta(1), epsilon(1). CF(0) has three main subunits: a(1), b(2) and c(9-12). The alpha and beta chains form an alternating ring which encloses part of the gamma chain. CF(1) is attached to CF(0) by a central stalk formed by the gamma and epsilon chains, while a peripheral stalk is formed by the delta and b chains.

Its subcellular location is the cell inner membrane. Functionally, key component of the proton channel; it plays a direct role in the translocation of protons across the membrane. This chain is ATP synthase subunit a, found in Rickettsia peacockii (strain Rustic).